Reading from the N-terminus, the 482-residue chain is Pyruvate kinase (482 aa).

Arg37 serves as a coordination point for substrate. K(+) is bound by residues Asn39, Ser41, and Asp71. An ATP-binding site is contributed by 39–42 (NFSH). Residues Arg78 and Lys160 each coordinate ATP. Glu222 serves as a coordination point for Mg(2+). Residues Gly245, Asp246, and Thr278 each coordinate substrate. Asp246 contacts Mg(2+).

This sequence belongs to the pyruvate kinase family. In terms of assembly, homotetramer. Mg(2+) serves as cofactor. K(+) is required as a cofactor.

It carries out the reaction pyruvate + ATP = phosphoenolpyruvate + ADP + H(+). It participates in carbohydrate degradation; glycolysis; pyruvate from D-glyceraldehyde 3-phosphate: step 5/5. The chain is Pyruvate kinase (ttuE) from Agrobacterium vitis (Rhizobium vitis).